A 587-amino-acid chain; its full sequence is Aspartate--tRNA ligase (587 aa).

Glutamate 173 is an L-aspartate binding site. The aspartate stretch occupies residues 197-200 (QTLK). Arginine 219 is a binding site for L-aspartate. Residues 219–221 (RDE) and glutamine 228 each bind ATP. Histidine 446 serves as a coordination point for L-aspartate. Glutamate 480 contributes to the ATP binding site. Arginine 487 is an L-aspartate binding site. 532-535 (GLDR) serves as a coordination point for ATP.

The protein belongs to the class-II aminoacyl-tRNA synthetase family. Type 1 subfamily. As to quaternary structure, homodimer.

Its subcellular location is the cytoplasm. It carries out the reaction tRNA(Asp) + L-aspartate + ATP = L-aspartyl-tRNA(Asp) + AMP + diphosphate. Functionally, catalyzes the attachment of L-aspartate to tRNA(Asp) in a two-step reaction: L-aspartate is first activated by ATP to form Asp-AMP and then transferred to the acceptor end of tRNA(Asp). This is Aspartate--tRNA ligase from Bacteroides thetaiotaomicron (strain ATCC 29148 / DSM 2079 / JCM 5827 / CCUG 10774 / NCTC 10582 / VPI-5482 / E50).